A 703-amino-acid chain; its full sequence is Phosphate acetyltransferase (703 aa).

The phosphate acetyltransferase stretch occupies residues 377 to 703; the sequence is AFRYELIQKA…IQATQAREGA (327 aa).

It in the N-terminal section; belongs to the CobB/CobQ family. In the C-terminal section; belongs to the phosphate acetyltransferase and butyryltransferase family.

It is found in the cytoplasm. It catalyses the reaction acetyl-CoA + phosphate = acetyl phosphate + CoA. The protein operates within metabolic intermediate biosynthesis; acetyl-CoA biosynthesis; acetyl-CoA from acetate: step 2/2. In terms of biological role, involved in acetate metabolism. This chain is Phosphate acetyltransferase (pta), found in Deinococcus geothermalis (strain DSM 11300 / CIP 105573 / AG-3a).